The chain runs to 627 residues: Protein fem-1 homolog B (627 aa).

ANK repeat units lie at residues 45 to 74 (QRSTPLIIAARNGHAKVVRLLLEHYRVQTQ), 87 to 116 (DGATALWCAAGAGHFEVVKLLVSHGANVNH), 120 to 149 (TNSTPLRAACFDGRLDIVKYLVENNANISI), and 153 to 182 (YDNTCLMIAAYKGHTDVVRYLLEQRADPNA). Zn(2+) is bound by residues H185, C186, and H218. ANK repeat units follow at residues 186-215 (CGATALHFAAEAGHIDIVKELIKWRAAIVV) and 218-248 (HGMTPLKVAAESCKADVVELLLSHADCDRRS). One copy of the TPR repeat lies at 344 to 377 (SHPIIYRGAVYADNMEFEQCIKLWLHALHLRQKG). 2 ANK repeats span residues 483–527 (EGFS…EVNA) and 531–568 (EGNSALHIIVQYNRPISDFLTLHSIIISLVEAGAHTDM).

This sequence belongs to the fem-1 family. In terms of assembly, component of a CRL2 E3 ubiquitin-protein ligase complex, also named ECS (Elongin BC-CUL2/5-SOCS-box protein) complex, composed of CUL2, Elongin BC (ELOB and ELOC), RBX1 and substrate-specific adapter FEM1B. Homooligomer. Interacts with PPM1F and PHTF1. Interacts with the death domain of FAS/TNFRSF6 and TNFRSF1A. Interacts with CHEK1. Interacts with NKX3-1. Expressed in pancreatic islets, within both beta cells and non-beta cells (at protein level). Highly expressed in adult testis; expressed in all types of spermatogonia. Also expressed in the prostate of neonatal mice.

Its subcellular location is the cytoplasm. It localises to the nucleus. It participates in protein modification; protein ubiquitination. Its activity is regulated as follows. Activity of the CRL2(FEM1B) complex toward FNIP1 is inhibited by BEX family proteins (BEX1, BEX2, BEX3 and/or BEX4) in absence of reductive stress. Mechanistically, BEX proteins act as pseudosubstrate inhibitors that associate with FEM1B via zinc in absence of reductive stress, thereby preventing association between FEM1B and FNIP1. Its function is as follows. Substrate-recognition component of a Cul2-RING (CRL2) E3 ubiquitin-protein ligase complex of the DesCEND (destruction via C-end degrons) pathway, which recognizes a C-degron located at the extreme C terminus of target proteins, leading to their ubiquitination and degradation. The C-degron recognized by the DesCEND pathway is usually a motif of less than ten residues and can be present in full-length proteins, truncated proteins or proteolytically cleaved forms. The CRL2(FEM1B) complex specifically recognizes proteins ending with -Gly-Leu-Asp-Arg, such as CDK5R1, leading to their ubiquitination and degradation. Also acts as a regulator of the reductive stress response by mediating ubiquitination of reduced FNIP1: in response to reductive stress, the CRL2(FEM1B) complex specifically recognizes a conserved Cys degron in FNIP1 when this degron is reduced, leading to FNIP1 degradation and subsequent activation of mitochondria to recalibrate reactive oxygen species (ROS). Mechanistically, recognizes and binds reduced FNIP1 through two interface zinc ions, which act as a molecular glue that recruit reduced FNIP1 to FEM1B. Promotes ubiquitination of GLI1, suppressing GLI1 transcriptional activator activity. Promotes ubiquitination and degradation of ANKRD37. Promotes ubiquitination and degradation of SLBP. Involved in apoptosis by acting as a death receptor-associated protein that mediates apoptosis. Also involved in glucose homeostasis in pancreatic islet. May also act as an adapter/mediator in replication stress-induced signaling that leads to the activation of CHEK1. The sequence is that of Protein fem-1 homolog B from Mus musculus (Mouse).